A 41-amino-acid polypeptide reads, in one-letter code: Large ribosomal subunit protein bL36 (41 aa).

It belongs to the bacterial ribosomal protein bL36 family.

In Rhodopseudomonas palustris (strain BisA53), this protein is Large ribosomal subunit protein bL36.